The chain runs to 455 residues: UDP-N-acetylmuramate--L-alanine ligase (455 aa).

109-115 (GTHGKTT) contacts ATP.

This sequence belongs to the MurCDEF family.

Its subcellular location is the cytoplasm. It carries out the reaction UDP-N-acetyl-alpha-D-muramate + L-alanine + ATP = UDP-N-acetyl-alpha-D-muramoyl-L-alanine + ADP + phosphate + H(+). Its pathway is cell wall biogenesis; peptidoglycan biosynthesis. Its function is as follows. Cell wall formation. This Caldicellulosiruptor bescii (strain ATCC BAA-1888 / DSM 6725 / KCTC 15123 / Z-1320) (Anaerocellum thermophilum) protein is UDP-N-acetylmuramate--L-alanine ligase.